Here is a 456-residue protein sequence, read N- to C-terminus: Probable hexose phosphate transport protein (456 aa).

11 consecutive transmembrane segments (helical) span residues 34–54 (IFYS…SFTF), 70–90 (LGII…VSGV), 113–133 (IFFG…INGW), 161–181 (VWST…GVAI), 185–205 (GWRG…FILI), 257–277 (YVLS…IYVV), 302–322 (LCVS…GWLS), 331–351 (GPMN…LWGT), 363–383 (FLFI…LAAA), 394–414 (ASGF…YPLG), and 421–441 (GWHG…ILFL).

It belongs to the major facilitator superfamily. Organophosphate:Pi antiporter (OPA) (TC 2.A.1.4) family.

It is found in the cell membrane. Transport protein for sugar phosphate uptake. In Chlamydia trachomatis serovar D (strain ATCC VR-885 / DSM 19411 / UW-3/Cx), this protein is Probable hexose phosphate transport protein.